Here is a 157-residue protein sequence, read N- to C-terminus: Ribosome maturation factor RimM (157 aa).

A PRC barrel domain is found at 89-156; the sequence is PGEYYHVDLI…DRLLIDPEFV (68 aa).

The protein belongs to the RimM family. In terms of assembly, binds ribosomal protein uS19.

It is found in the cytoplasm. Its function is as follows. An accessory protein needed during the final step in the assembly of 30S ribosomal subunit, possibly for assembly of the head region. Essential for efficient processing of 16S rRNA. May be needed both before and after RbfA during the maturation of 16S rRNA. It has affinity for free ribosomal 30S subunits but not for 70S ribosomes. The sequence is that of Ribosome maturation factor RimM from Rhizorhabdus wittichii (strain DSM 6014 / CCUG 31198 / JCM 15750 / NBRC 105917 / EY 4224 / RW1) (Sphingomonas wittichii).